The primary structure comprises 208 residues: Uridine kinase (208 aa).

Residue 11-18 (GGTGSGKS) coordinates ATP.

This sequence belongs to the uridine kinase family.

The protein resides in the cytoplasm. It catalyses the reaction uridine + ATP = UMP + ADP + H(+). The catalysed reaction is cytidine + ATP = CMP + ADP + H(+). It functions in the pathway pyrimidine metabolism; CTP biosynthesis via salvage pathway; CTP from cytidine: step 1/3. Its pathway is pyrimidine metabolism; UMP biosynthesis via salvage pathway; UMP from uridine: step 1/1. This is Uridine kinase from Alkaliphilus metalliredigens (strain QYMF).